Here is an 80-residue protein sequence, read N- to C-terminus: Adipogenin (80 aa).

A helical transmembrane segment spans residues 14–34 (FSFLVFWFCLPVGLLLLLIIW).

It belongs to the adipogenin family.

Its subcellular location is the membrane. The protein resides in the nucleus. Functionally, plays a role in stimulating adipocyte differentiation and development. This Homo sapiens (Human) protein is Adipogenin.